A 524-amino-acid polypeptide reads, in one-letter code: M phase phosphoprotein 10 (524 aa).

The Nuclear localization signal 1 signature appears at 85-92 (VKRFAKNP). Disordered regions lie at residues 100 to 243 (KLAL…KLGK) and 259 to 283 (KLKDLSEDEEAEIENKGNEKLSTHE). Residues 109 to 168 (DDIDEMDMDGFDSDDVDDEDKEIESNDSEGEDEEEEEEDEEEEEEEEEEEEEEKDGDNEG) show a composition bias toward acidic residues. The stretch at 131 to 165 (IESNDSEGEDEEEEEEDEEEEEEEEEEEEEEKDGD) forms a coiled coil. Residues 169 to 180 (IEDKFFKIKELE) are compositionally biased toward basic and acidic residues. A compositionally biased stretch (acidic residues) spans 181-191 (EFLEEGEAEEY). Over residues 196 to 207 (KNKKGVAQRKKQ) the composition is skewed to basic residues. A compositionally biased stretch (acidic residues) spans 210-238 (SDDEDEEDDDDEEEDVEFDAFAGGDDEET). A coiled-coil region spans residues 257-302 (KMKLKDLSEDEEAEIENKGNEKLSTHERARLKLQSKIEQMEKANLD). Basic and acidic residues predominate over residues 271 to 283 (IENKGNEKLSTHE). The short motif at 373 to 380 (GKREAKEL) is the Nuclear localization signal 2 element. A disordered region spans residues 479–524 (KGDIKDESELTQEDRKRRRANKKRKFKAESANEPPKKALDTSTKNP). The segment covering 480 to 493 (GDIKDESELTQEDR) has biased composition (basic and acidic residues). Basic residues predominate over residues 494-504 (KRRRANKKRKF). Over residues 505 to 517 (KAESANEPPKKAL) the composition is skewed to basic and acidic residues.

Belongs to the MPP10 family. As to quaternary structure, component of the ribosomal small subunit (SSU) processome. Interacts with THAL in the nucleus.

The protein resides in the nucleus. It localises to the nucleolus. Functionally, involved in nucleolar processing of pre-18S ribosomal RNA. This is M phase phosphoprotein 10 from Arabidopsis thaliana (Mouse-ear cress).